Reading from the N-terminus, the 1485-residue chain is Putative E3 ubiquitin-protein ligase LIN-2 (1485 aa).

Residues 337 to 353 (EENEDDSDSELDNESVD) show a composition bias toward acidic residues. 3 disordered regions span residues 337–363 (EENE…IFSP), 384–450 (NQIP…ISNA), and 462–507 (RKND…KLSM). Residues 438-450 (SSPDISIDNISNA) show a composition bias toward low complexity. Over residues 466 to 484 (SQTPSMNQDNENSLVLNDS) the composition is skewed to polar residues. The region spanning 510 to 585 (KPPKDFVCPI…TSWKEQNPEL (76 aa)) is the U-box domain. 4 WD repeats span residues 1194-1232 (SCKE…KVCD), 1246-1283 (EHTK…IKCI), 1409-1448 (SLST…RVAS), and 1454-1485 (GHTK…WALD).

The catalysed reaction is S-ubiquitinyl-[E2 ubiquitin-conjugating enzyme]-L-cysteine + [acceptor protein]-L-lysine = [E2 ubiquitin-conjugating enzyme]-L-cysteine + N(6)-ubiquitinyl-[acceptor protein]-L-lysine.. Its pathway is protein modification; protein ubiquitination. Its function is as follows. Putative E3 ubiquitin-protein ligase involved in the rhizobial infection process. Plays an important role in the early steps of infection thread formation and in growth and differentiation of nodules. The chain is Putative E3 ubiquitin-protein ligase LIN-2 from Lotus japonicus (Lotus corniculatus var. japonicus).